A 463-amino-acid chain; its full sequence is Succinate--CoA ligase [ADP-forming] subunit beta, mitochondrial (463 aa).

A mitochondrion-targeting transit peptide spans M1–L53. The ATP-grasp domain occupies M61–I288. Position 78 is an N6-acetyllysine (K78). Residue Y84 is modified to Phosphotyrosine. K88 carries the N6-acetyllysine; alternate modification. K88 carries the N6-succinyllysine; alternate modification. Residues K98 and G105–G107 each bind ATP. N6-acetyllysine is present on residues K129, K139, K143, and K216. 2 residues coordinate Mg(2+): N258 and D272. A Phosphoserine modification is found at S279. Substrate is bound at residue N323. The residue at position 341 (T341) is a Phosphothreonine. Residue K368 is modified to N6-acetyllysine. G380–M382 is a substrate binding site. Position 438 is an N6-acetyllysine (K438).

It belongs to the succinate/malate CoA ligase beta subunit family. ATP-specific subunit beta subfamily. In terms of assembly, heterodimer of an alpha and a beta subunit. The beta subunit determines specificity for ATP. Interacts with ALAS2. Mg(2+) serves as cofactor.

It localises to the mitochondrion. The catalysed reaction is succinate + ATP + CoA = succinyl-CoA + ADP + phosphate. Its pathway is carbohydrate metabolism; tricarboxylic acid cycle; succinate from succinyl-CoA (ligase route): step 1/1. Its function is as follows. ATP-specific succinyl-CoA synthetase functions in the citric acid cycle (TCA), coupling the hydrolysis of succinyl-CoA to the synthesis of ATP and thus represents the only step of substrate-level phosphorylation in the TCA. The beta subunit provides nucleotide specificity of the enzyme and binds the substrate succinate, while the binding sites for coenzyme A and phosphate are found in the alpha subunit. This chain is Succinate--CoA ligase [ADP-forming] subunit beta, mitochondrial, found in Mus musculus (Mouse).